A 448-amino-acid polypeptide reads, in one-letter code: Probable rhamnogalacturonase E (448 aa).

Residues 1 to 22 form the signal peptide; the sequence is MTWSTSFLVATSLLSIINSVHA. C43 and C69 are disulfide-bonded. N-linked (GlcNAc...) asparagine glycosylation is found at N54, N92, and N131. The active-site Proton donor is the D221. A disulfide bond links C223 and C240. 2 N-linked (GlcNAc...) asparagine glycosylation sites follow: N256 and N284. H296 is a catalytic residue. N-linked (GlcNAc...) asparagine glycans are attached at residues N323 and N328. Disulfide bonds link C346-C352 and C374-C382.

This sequence belongs to the glycosyl hydrolase 28 family.

The protein localises to the secreted. Its function is as follows. Pectinolytic enzymes consist of four classes of enzymes: pectine lyase, polygalacturonase, pectin methylesterase and rhamnogalacturonase. Hydrolyzes alpha-D-galacturonopyranosyl-(1,2)-alpha-L-rhamnopyranosyl linkages in the backbone of the hairy regions of pectins. This is Probable rhamnogalacturonase E (rhgE) from Aspergillus niger (strain ATCC MYA-4892 / CBS 513.88 / FGSC A1513).